We begin with the raw amino-acid sequence, 462 residues long: MKLYNTLTRKKEEFKPIKEKNVGIYVCGPTVYNYIHVGNARPIVVFDTLRRYFIYKGYNVKFVSNFTDIDDKIINKAKDENIDFREITKKYIQAYLDNVSGLNFDEDDTIHPKATEYIDEMIKFVKTLEDKGAAYNVDGNVYFDITKAKDYGKLSKKNIDDLRAGARIDVNSEKKNPMDFALWKKRKEESEPAWESPWGMGRPGWHLECSVMSKTILGDTIDIHAGGEDLQFPHHENEIAQSETCTGAHFANYWLHNSMITVDKEKMSKSKNNFFLLKDIEKEFDLEVIRLWLLSVHYRNPIDFSHDTLVATKNSLDRLYTAKKFLNRILENSSEKEEKDDNIKTFREKFEQAMDDDINTADAISVLFDFIKYINKNYDENTSKNILLDAKKLMDDISYVLGILFKEDDDDLDSEIEELIEQRNAARKEKDFKKADEIRDKLLSMGIVLKDTRDGVIWERSN.

Residue Cys27 participates in Zn(2+) binding. The 'HIGH' region motif lies at 29 to 39 (PTVYNYIHVGN). Residues Cys209, His234, and Glu238 each coordinate Zn(2+). The 'KMSKS' region signature appears at 266-270 (KMSKS). Position 269 (Lys269) interacts with ATP.

It belongs to the class-I aminoacyl-tRNA synthetase family. In terms of assembly, monomer. Zn(2+) serves as cofactor.

It localises to the cytoplasm. It carries out the reaction tRNA(Cys) + L-cysteine + ATP = L-cysteinyl-tRNA(Cys) + AMP + diphosphate. The sequence is that of Cysteine--tRNA ligase from Finegoldia magna (strain ATCC 29328 / DSM 20472 / WAL 2508) (Peptostreptococcus magnus).